The sequence spans 340 residues: Probable glucan endo-1,3-beta-glucosidase BG1 (340 aa).

The first 25 residues, 1 to 25 (MDLRFLASLTLLLGLFFVNTNPTGG), serve as a signal peptide directing secretion. Glutamate 120 functions as the Proton donor in the catalytic mechanism. Catalysis depends on glutamate 262, which acts as the Nucleophile.

Belongs to the glycosyl hydrolase 17 family.

It is found in the secreted. It carries out the reaction Hydrolysis of (1-&gt;3)-beta-D-glucosidic linkages in (1-&gt;3)-beta-D-glucans.. May play a role in plant defense against pathogens. The chain is Probable glucan endo-1,3-beta-glucosidase BG1 from Arabidopsis thaliana (Mouse-ear cress).